A 461-amino-acid chain; its full sequence is tRNA modification GTPase MnmE (461 aa).

Residues Arg-27, Glu-89, and Arg-128 each contribute to the (6S)-5-formyl-5,6,7,8-tetrahydrofolate site. The 159-residue stretch at 224–382 (GLATAIVGRP…LENAIEQLFF (159 aa)) folds into the TrmE-type G domain. Position 234 (Asn-234) interacts with K(+). GTP contacts are provided by residues 234-239 (NVGKSS), 253-259 (TDIAGTT), and 278-281 (DTAG). Residue Ser-238 participates in Mg(2+) binding. Residues Thr-253, Ile-255, and Thr-258 each contribute to the K(+) site. Residue Thr-259 participates in Mg(2+) binding. Residue Lys-461 participates in (6S)-5-formyl-5,6,7,8-tetrahydrofolate binding.

Belongs to the TRAFAC class TrmE-Era-EngA-EngB-Septin-like GTPase superfamily. TrmE GTPase family. Homodimer. Heterotetramer of two MnmE and two MnmG subunits. The cofactor is K(+).

It localises to the cytoplasm. Functionally, exhibits a very high intrinsic GTPase hydrolysis rate. Involved in the addition of a carboxymethylaminomethyl (cmnm) group at the wobble position (U34) of certain tRNAs, forming tRNA-cmnm(5)s(2)U34. The chain is tRNA modification GTPase MnmE from Lactobacillus johnsonii (strain CNCM I-12250 / La1 / NCC 533).